The sequence spans 183 residues: Ribosome rescue factor SmrB (183 aa).

The Smr domain occupies 98-173; sequence LDLHGLTQLQ…GDAALLVLIE (76 aa).

It belongs to the SmrB family. In terms of assembly, associates with collided ribosomes, but not with correctly translating polysomes.

In terms of biological role, acts as a ribosome collision sensor. Detects stalled/collided disomes (pairs of ribosomes where the leading ribosome is stalled and a second ribosome has collided with it) and endonucleolytically cleaves mRNA at the 5' boundary of the stalled ribosome. Stalled/collided disomes form a new interface (primarily via the 30S subunits) that binds SmrB. Cleaved mRNA becomes available for tmRNA ligation, leading to ribosomal subunit dissociation and rescue of stalled ribosomes. The chain is Ribosome rescue factor SmrB from Shigella dysenteriae serotype 1 (strain Sd197).